We begin with the raw amino-acid sequence, 1296 residues long: Phosphoribosylformylglycinamidine synthase (1296 aa).

Residues 300-325 form a disordered region; sequence APFSGAATGSGGEIRDEGATGRGSKP. ATP contacts are provided by residues 304–315 and A675; that span reads GAATGSGGEIRD. Residues E715, N719, and D885 each contribute to the Mg(2+) site. S887 contributes to the ATP binding site. The region spanning 1043-1296 is the Glutamine amidotransferase type-1 domain; sequence MAILREQGVN…MFRNARKNVG (254 aa). C1136 acts as the Nucleophile in catalysis. Residues 1232 to 1253 form a disordered region; it reads TQYPANPNGSPEGITGITSTDG. Active-site residues include H1261 and E1263.

This sequence in the N-terminal section; belongs to the FGAMS family. Monomer.

The protein resides in the cytoplasm. The enzyme catalyses N(2)-formyl-N(1)-(5-phospho-beta-D-ribosyl)glycinamide + L-glutamine + ATP + H2O = 2-formamido-N(1)-(5-O-phospho-beta-D-ribosyl)acetamidine + L-glutamate + ADP + phosphate + H(+). It functions in the pathway purine metabolism; IMP biosynthesis via de novo pathway; 5-amino-1-(5-phospho-D-ribosyl)imidazole from N(2)-formyl-N(1)-(5-phospho-D-ribosyl)glycinamide: step 1/2. In terms of biological role, phosphoribosylformylglycinamidine synthase involved in the purines biosynthetic pathway. Catalyzes the ATP-dependent conversion of formylglycinamide ribonucleotide (FGAR) and glutamine to yield formylglycinamidine ribonucleotide (FGAM) and glutamate. The polypeptide is Phosphoribosylformylglycinamidine synthase (Pseudoalteromonas translucida (strain TAC 125)).